Consider the following 507-residue polypeptide: ATP synthase subunit alpha, chloroplastic (507 aa).

170 to 177 serves as a coordination point for ATP; the sequence is GDRQTGKT.

It belongs to the ATPase alpha/beta chains family. F-type ATPases have 2 components, CF(1) - the catalytic core - and CF(0) - the membrane proton channel. CF(1) has five subunits: alpha(3), beta(3), gamma(1), delta(1), epsilon(1). CF(0) has four main subunits: a, b, b' and c.

The protein localises to the plastid. It localises to the chloroplast thylakoid membrane. The enzyme catalyses ATP + H2O + 4 H(+)(in) = ADP + phosphate + 5 H(+)(out). In terms of biological role, produces ATP from ADP in the presence of a proton gradient across the membrane. The alpha chain is a regulatory subunit. The protein is ATP synthase subunit alpha, chloroplastic of Cucumis sativus (Cucumber).